The following is a 444-amino-acid chain: MKILLIGGGARESAIAHALKKNEEVKLYTLMKNKNPGIARLSEEIKLAKETDLDAVKEFAEKVKPDLAVIGPEAPLGEGVVDLLEEMGISAVGPKKLAAQIETNKEFMRNLFKKYNIKGSLMYKAFEEYGEELESFIDELTEKGIKAVVKPVGLTGGKGVKVVGEQLKDNEEAKKYAKEIFETGLGGGKVLIEEKLEGVEFTLHGFVDGDTIKFTPFVQDHPHALEGDEGSITGGMGSYSCPDHKLPFMTEEDVKLAKEIMEETVKALKEEVGGYKGILYGQFMLTKEGPKIIEYNARFGDPEAMNLLAILKNDFLEVCEAIVNKKLKDIDVEFENKATVCKYVVPKGYPDNPVRGEPITVDEEAIKKTGAILHYASVNEDNGSLYMTGSRAVAVVGVADTIEEAERIAEEATKYIKGEVYHRSDIGKKELIKKRIEKMNELRR.

An ATP-grasp domain is found at 109–324 (RNLFKKYNIK…FLEVCEAIVN (216 aa)). ATP is bound at residue 140 to 202 (LTEKGIKAVV…EEKLEGVEFT (63 aa)). Glutamine 282, glutamate 294, and asparagine 296 together coordinate Mg(2+). Positions 282, 294, and 296 each coordinate Mn(2+).

Belongs to the GARS family. The cofactor is Mg(2+). It depends on Mn(2+) as a cofactor.

It carries out the reaction 5-phospho-beta-D-ribosylamine + glycine + ATP = N(1)-(5-phospho-beta-D-ribosyl)glycinamide + ADP + phosphate + H(+). It functions in the pathway purine metabolism; IMP biosynthesis via de novo pathway; N(1)-(5-phospho-D-ribosyl)glycinamide from 5-phospho-alpha-D-ribose 1-diphosphate: step 2/2. The chain is Phosphoribosylamine--glycine ligase from Methanocaldococcus jannaschii (strain ATCC 43067 / DSM 2661 / JAL-1 / JCM 10045 / NBRC 100440) (Methanococcus jannaschii).